An 892-amino-acid polypeptide reads, in one-letter code: Iodate reductase subunit IdrA (892 aa).

C27, C30, and C34 together coordinate [3Fe-4S] cluster. Residues 431 to 442 (RGGGHQRGGLSA) are compositionally biased toward gly residues. Residues 431-452 (RGGGHQRGGLSAGGNSEWLSPE) are disordered.

Belongs to the prokaryotic molybdopterin-containing oxidoreductase family. In terms of assembly, the iodate reductase (Idr) complex is composed of a molybdopterin-dependent iodate reductase (IdrA and IdrB subunits) and two associated peroxidases (IdrP1 and IdrP2). [3Fe-4S] cluster is required as a cofactor. The cofactor is Mo-bis(molybdopterin guanine dinucleotide).

The protein resides in the periplasm. Functionally, involved in iodate respiration. Probably catalyzes the reduction of iodate (IO(3)(-)) to hypoiodous acid (HIO) and H(2)O(2), using a reduced cytochrome c as the electron donor. This is Iodate reductase subunit IdrA from Pseudomonas sp. (strain SCT).